A 360-amino-acid polypeptide reads, in one-letter code: Peptide chain release factor 1 (360 aa).

The residue at position 234 (Gln-234) is an N5-methylglutamine.

This sequence belongs to the prokaryotic/mitochondrial release factor family. Post-translationally, methylated by PrmC. Methylation increases the termination efficiency of RF1.

The protein localises to the cytoplasm. Peptide chain release factor 1 directs the termination of translation in response to the peptide chain termination codons UAG and UAA. The chain is Peptide chain release factor 1 from Clostridium botulinum (strain Eklund 17B / Type B).